Reading from the N-terminus, the 223-residue chain is Phosphoribosylformylglycinamidine synthase subunit PurQ (223 aa).

One can recognise a Glutamine amidotransferase type-1 domain in the interval 3–223 (FAVLVFPGSN…MVKSWREQHV (221 aa)). The active-site Nucleophile is the Cys85. Catalysis depends on residues His193 and Glu195.

Part of the FGAM synthase complex composed of 1 PurL, 1 PurQ and 2 PurS subunits.

Its subcellular location is the cytoplasm. The catalysed reaction is N(2)-formyl-N(1)-(5-phospho-beta-D-ribosyl)glycinamide + L-glutamine + ATP + H2O = 2-formamido-N(1)-(5-O-phospho-beta-D-ribosyl)acetamidine + L-glutamate + ADP + phosphate + H(+). It catalyses the reaction L-glutamine + H2O = L-glutamate + NH4(+). It functions in the pathway purine metabolism; IMP biosynthesis via de novo pathway; 5-amino-1-(5-phospho-D-ribosyl)imidazole from N(2)-formyl-N(1)-(5-phospho-D-ribosyl)glycinamide: step 1/2. Its function is as follows. Part of the phosphoribosylformylglycinamidine synthase complex involved in the purines biosynthetic pathway. Catalyzes the ATP-dependent conversion of formylglycinamide ribonucleotide (FGAR) and glutamine to yield formylglycinamidine ribonucleotide (FGAM) and glutamate. The FGAM synthase complex is composed of three subunits. PurQ produces an ammonia molecule by converting glutamine to glutamate. PurL transfers the ammonia molecule to FGAR to form FGAM in an ATP-dependent manner. PurS interacts with PurQ and PurL and is thought to assist in the transfer of the ammonia molecule from PurQ to PurL. This chain is Phosphoribosylformylglycinamidine synthase subunit PurQ, found in Staphylococcus aureus (strain USA300).